The following is a 188-amino-acid chain: Methylated-DNA--protein-cysteine methyltransferase (188 aa).

DNA is bound by residues Tyr-120, Gly-121, and Arg-134. The active-site Nucleophile; methyl group acceptor is the Cys-151. A DNA-binding site is contributed by Ser-157.

Belongs to the MGMT family.

It localises to the nucleus. The catalysed reaction is a 6-O-methyl-2'-deoxyguanosine in DNA + L-cysteinyl-[protein] = S-methyl-L-cysteinyl-[protein] + a 2'-deoxyguanosine in DNA. It catalyses the reaction a 4-O-methyl-thymidine in DNA + L-cysteinyl-[protein] = a thymidine in DNA + S-methyl-L-cysteinyl-[protein]. Its function is as follows. Involved in the cellular defense against the biological effects of O6-methylguanine (O6-MeG) and O4-methylthymine (O4-MeT) in DNA. Repairs the methylated nucleobase in DNA by stoichiometrically transferring the methyl group to a cysteine residue in the enzyme. This is a suicide reaction: the enzyme is irreversibly inactivated. Prefers double-stranded DNA over single-stranded DNA as substrate. This chain is Methylated-DNA--protein-cysteine methyltransferase (MGT1), found in Saccharomyces cerevisiae (strain YJM789) (Baker's yeast).